The following is a 794-amino-acid chain: Zinc finger protein 148 (794 aa).

Lys-6 is covalently cross-linked (Glycyl lysine isopeptide (Lys-Gly) (interchain with G-Cter in SUMO2)). Position 51 is a phosphoserine (Ser-51). Glycyl lysine isopeptide (Lys-Gly) (interchain with G-Cter in SUMO2) cross-links involve residues Lys-88, Lys-115, and Lys-132. A C2H2-type 1 zinc finger spans residues 171 to 193 (HVCEHCNAAFRTNYHLQRHVFIH). Position 194 is a phosphothreonine (Thr-194). 2 C2H2-type zinc fingers span residues 199–221 (FQCS…EKIH) and 227–249 (FRCD…KRTH). At Ser-250 the chain carries Phosphoserine. The C2H2-type 4 zinc-finger motif lies at 255 to 278 (YQCEYCLQYFSRTDRVLKHKRMCH). Lys-291 is covalently cross-linked (Glycyl lysine isopeptide (Lys-Gly) (interchain with G-Cter in SUMO2)). The tract at residues 298 to 346 (EEDSGFSTSPKDNSLPKKKRQKPEKKSSGMDKESVLDKSDTKKDRNDYL) is disordered. A phosphoserine mark is found at Ser-301 and Ser-306. Lys-308 is covalently cross-linked (Glycyl lysine isopeptide (Lys-Gly) (interchain with G-Cter in SUMO2)). The segment covering 321–344 (EKKSSGMDKESVLDKSDTKKDRND) has biased composition (basic and acidic residues). Lys-356 is covalently cross-linked (Glycyl lysine isopeptide (Lys-Gly) (interchain with G-Cter in SUMO1); alternate). A Glycyl lysine isopeptide (Lys-Gly) (interchain with G-Cter in SUMO2); alternate cross-link involves residue Lys-356. Lys-402 participates in a covalent cross-link: Glycyl lysine isopeptide (Lys-Gly) (interchain with G-Cter in SUMO2). The residue at position 412 (Ser-412) is a Phosphoserine. Glycyl lysine isopeptide (Lys-Gly) (interchain with G-Cter in SUMO2) cross-links involve residues Lys-421 and Lys-424. Residues 574–588 (NSSDVPEVTQSENVG) show a composition bias toward polar residues. Residues 574 to 596 (NSSDVPEVTQSENVGSSSQASSS) are disordered. The residue at position 607 (Lys-607) is an N6-acetyllysine. Phosphoserine is present on residues Ser-665 and Ser-784.

Belongs to the krueppel C2H2-type zinc-finger protein family. As to quaternary structure, interacts with HNRNPDL. Interacts with the 5FMC complex; the interaction requires association with CHTOP. Interacts with CAVIN1. Post-translationally, sumoylated with SUMO2. Desumoylated by SENP3, resulting in the stimulation of transcription of its target genes. As to expression, expressed in heart, lung, kidney, skeletal muscle, liver, brain and spleen.

It is found in the nucleus. Its function is as follows. Involved in transcriptional regulation. Represses the transcription of a number of genes including gastrin, stromelysin and enolase. Binds to the G-rich box in the enhancer region of these genes. The protein is Zinc finger protein 148 (Znf148) of Rattus norvegicus (Rat).